Reading from the N-terminus, the 605-residue chain is Protein cueball (605 aa).

An N-terminal signal peptide occupies residues 1–31; that stretch reads MAYIDQKHNTFWDDFAIALRDKIVFLNSTWG. N-linked (GlcNAc...) asparagine glycosylation is found at Asn27, Asn64, and Asn85. The Extracellular portion of the chain corresponds to 32 to 486; that stretch reads EIHASAHRFE…QCGPAPPVQG (455 aa). LDL-receptor class B repeat units follow at residues 53–97, 98–145, 146–190, and 191–236; these read EMIY…DPLN, RNLF…DICR, RQLY…DQLS, and DRIF…NEDA. N-linked (GlcNAc...) asparagine glycans are attached at residues Asn261 and Asn314. EGF-like domains are found at residues 322–359 and 394–431; these read EGDR…ARCE and EYHK…ERCE. 5 cysteine pairs are disulfide-bonded: Cys334–Cys347, Cys349–Cys358, Cys398–Cys408, Cys402–Cys419, and Cys421–Cys430. N-linked (GlcNAc...) asparagine glycans are attached at residues Asn433 and Asn464. A helical transmembrane segment spans residues 487–507; sequence PLIIVIVLGLVTTSGLVALTV. At 508-605 the chain is on the cytoplasmic side; sequence HGVRLIYKPK…IHSMEDNLLS (98 aa).

This sequence belongs to the cueball family.

It localises to the cell membrane. Its function is as follows. Has a role in spermatogenesis and oogenesis. This is Protein cueball from Drosophila grimshawi (Hawaiian fruit fly).